We begin with the raw amino-acid sequence, 250 residues long: Urease accessory protein UreF (250 aa).

The segment at 1–21 (MDEADPGEAEAAQAEAAQDGA) is disordered. Over residues 9-21 (AEAAQAEAAQDGA) the composition is skewed to low complexity.

It belongs to the UreF family. In terms of assembly, ureD, UreF and UreG form a complex that acts as a GTP-hydrolysis-dependent molecular chaperone, activating the urease apoprotein by helping to assemble the nickel containing metallocenter of UreC. The UreE protein probably delivers the nickel.

Its subcellular location is the cytoplasm. Functionally, required for maturation of urease via the functional incorporation of the urease nickel metallocenter. The sequence is that of Urease accessory protein UreF from Methylobacterium sp. (strain 4-46).